Here is a 114-residue protein sequence, read N- to C-terminus: Putative ANKRD40 C-terminal-like protein (114 aa).

The protein is Putative ANKRD40 C-terminal-like protein of Homo sapiens (Human).